The sequence spans 598 residues: MESGNIVNAQPELSGIIDGSKSYMYEQLWKLCAGPLCDIPKLGEKIYYFPQGNIELVEASTREELNELKPICDLPSKLQCRVIAIQLKVENNSDETYAEITLMPDTTQVVIPTQNENQFRPLVNSFTKVLTASDTSGGFFVPKKHAIECLPPLDMSQPLPTQELLATDLHGNQWRFNHNYRGTPQRHLLTTGWNAFTTSKKLVAGDVIVFVRGETGELRVGIRRAGHQQGNIPSSIISIESMRHGVIASAKHAFDNQCMFIVVYKPRSSQFIVSYDKFLDAVNNKFNVGSRFTMRFEGDDFSERRYFGTIIGVSDFSPHWKCSEWRNLEVQWDEFASFSRPNKVSPWEIEHLMPALNVPRPSLLKNKRLREVNEIGSSSSHLLPPILTQGQEIGQLSVASPMNISLTYRDTTEDVMNPSRLLMSYPVQPMPKLNYNNQMVTQIEENITTKTGTNFRLFGVSLVTPSVIKDPIEEIGSEISKLTEGKKFGQSQTLRSPTEIQSKQFSSTRTCTKVQMQGVTIERAVDLSVLNGYDQLILELEELFDLKGQLQTRNQWEIAFTDSDDDKMLVGDDPWPEFCNMVKKILIFKRGGQKLEVQ.

Residues 124–226 (NSFTKVLTAS…ELRVGIRRAG (103 aa)) constitute a DNA-binding region (TF-B3). The PB1 domain occupies 509 to 590 (RTCTKVQMQG…MVKKILIFKR (82 aa)).

It belongs to the ARF family. In terms of assembly, homodimers and heterodimers.

Its subcellular location is the nucleus. Its function is as follows. Auxin response factors (ARFs) are transcriptional factors that bind specifically to the DNA sequence 5'-TGTCTC-3' found in the auxin-responsive promoter elements (AuxREs). Could act as transcriptional activator or repressor. Formation of heterodimers with Aux/IAA proteins may alter their ability to modulate early auxin response genes expression. This chain is Auxin response factor 22 (ARF22), found in Arabidopsis thaliana (Mouse-ear cress).